Here is a 359-residue protein sequence, read N- to C-terminus: 4-hydroxy-3-methylbut-2-en-1-yl diphosphate synthase (flavodoxin) (359 aa).

[4Fe-4S] cluster is bound by residues C264, C267, C299, and E306.

This sequence belongs to the IspG family. [4Fe-4S] cluster is required as a cofactor.

The enzyme catalyses (2E)-4-hydroxy-3-methylbut-2-enyl diphosphate + oxidized [flavodoxin] + H2O + 2 H(+) = 2-C-methyl-D-erythritol 2,4-cyclic diphosphate + reduced [flavodoxin]. It participates in isoprenoid biosynthesis; isopentenyl diphosphate biosynthesis via DXP pathway; isopentenyl diphosphate from 1-deoxy-D-xylulose 5-phosphate: step 5/6. In terms of biological role, converts 2C-methyl-D-erythritol 2,4-cyclodiphosphate (ME-2,4cPP) into 1-hydroxy-2-methyl-2-(E)-butenyl 4-diphosphate. The sequence is that of 4-hydroxy-3-methylbut-2-en-1-yl diphosphate synthase (flavodoxin) from Helicobacter pylori (strain HPAG1).